A 324-amino-acid chain; its full sequence is MARRGKKKGRPISGWVIFDKPKGMGSTEAVSKIKWLFSAEKAGHAGTLDPLASGMLPIALGEATKTVPYVMDGTKVYRFTVTWGEERSTDDLEGQPTKTSDKRPSREEVEALLPDYTGVISQVPPQFSAIKIDGERAYDLAREGETVEIPAREVEIDRLEIVGFPDADRTEFEVECSKGTYVRSLARDMGRDLGCYGHISDLRRVEVAPFTDEDMVTLAKLEAVWPPLPPKDEDGNVIEPAPRRDFSALDALVIDTGAALDCLPQVPLSDDQAQRVRLGNPVILRGRDAPLEADEACVTTRGKLLAIGYIEHGQFKPKRVFTAG.

Asp-49 serves as the catalytic Nucleophile. The tract at residues 87 to 107 (RSTDDLEGQPTKTSDKRPSRE) is disordered.

The protein belongs to the pseudouridine synthase TruB family. Type 1 subfamily.

The catalysed reaction is uridine(55) in tRNA = pseudouridine(55) in tRNA. Its function is as follows. Responsible for synthesis of pseudouridine from uracil-55 in the psi GC loop of transfer RNAs. In Brucella abortus (strain 2308), this protein is tRNA pseudouridine synthase B.